The sequence spans 308 residues: Glutamyl-Q tRNA(Asp) synthetase (308 aa).

Residues 19 to 23 and Glu55 each bind L-glutamate; that span reads RFAPS. The 'HIGH' region motif lies at 22–32; sequence PSPSGELHFGS. Positions 111, 113, 125, and 129 each coordinate Zn(2+). Residues Tyr182 and Arg200 each contribute to the L-glutamate site. The 'KMSKS' region motif lies at 238–242; the sequence is KLSKQ. ATP is bound at residue Lys241.

It belongs to the class-I aminoacyl-tRNA synthetase family. GluQ subfamily. Zn(2+) serves as cofactor.

Functionally, catalyzes the tRNA-independent activation of glutamate in presence of ATP and the subsequent transfer of glutamate onto a tRNA(Asp). Glutamate is transferred on the 2-amino-5-(4,5-dihydroxy-2-cyclopenten-1-yl) moiety of the queuosine in the wobble position of the QUC anticodon. The polypeptide is Glutamyl-Q tRNA(Asp) synthetase (Escherichia coli (strain K12 / MC4100 / BW2952)).